Consider the following 93-residue polypeptide: Small ribosomal subunit protein uS17 (93 aa).

This sequence belongs to the universal ribosomal protein uS17 family. In terms of assembly, part of the 30S ribosomal subunit.

Its function is as follows. One of the primary rRNA binding proteins, it binds specifically to the 5'-end of 16S ribosomal RNA. The chain is Small ribosomal subunit protein uS17 from Bordetella bronchiseptica (strain ATCC BAA-588 / NCTC 13252 / RB50) (Alcaligenes bronchisepticus).